The chain runs to 651 residues: BTB/POZ domain-containing protein At3g44820 (651 aa).

In terms of domain architecture, BTB spans 25–96 (SDITVVVDDV…CYGARVDITS (72 aa)). In terms of domain architecture, NPH3 spans 211 to 509 (DWWYEDISYL…LQVLFFEQMH (299 aa)). The disordered stretch occupies residues 611–651 (DAKNDTVQNSVSSTPRSATADHTLPRSSRHSKHRKSFSFFG). A compositionally biased stretch (polar residues) spans 615-627 (DTVQNSVSSTPRS). Over residues 637–651 (SSRHSKHRKSFSFFG) the composition is skewed to basic residues.

The protein belongs to the NPH3 family.

The protein operates within protein modification; protein ubiquitination. May act as a substrate-specific adapter of an E3 ubiquitin-protein ligase complex (CUL3-RBX1-BTB) which mediates the ubiquitination and subsequent proteasomal degradation of target proteins. The protein is BTB/POZ domain-containing protein At3g44820 of Arabidopsis thaliana (Mouse-ear cress).